The following is a 130-amino-acid chain: Ribosome-binding factor A (130 aa).

This sequence belongs to the RbfA family. As to quaternary structure, monomer. Binds 30S ribosomal subunits, but not 50S ribosomal subunits or 70S ribosomes.

It localises to the cytoplasm. Its function is as follows. One of several proteins that assist in the late maturation steps of the functional core of the 30S ribosomal subunit. Associates with free 30S ribosomal subunits (but not with 30S subunits that are part of 70S ribosomes or polysomes). Required for efficient processing of 16S rRNA. May interact with the 5'-terminal helix region of 16S rRNA. The protein is Ribosome-binding factor A of Prochlorococcus marinus (strain MIT 9301).